Here is a 292-residue protein sequence, read N- to C-terminus: ATP synthase gamma chain (292 aa).

Belongs to the ATPase gamma chain family. In terms of assembly, F-type ATPases have 2 components, CF(1) - the catalytic core - and CF(0) - the membrane proton channel. CF(1) has five subunits: alpha(3), beta(3), gamma(1), delta(1), epsilon(1). CF(0) has three main subunits: a, b and c.

It localises to the cell inner membrane. Its function is as follows. Produces ATP from ADP in the presence of a proton gradient across the membrane. The gamma chain is believed to be important in regulating ATPase activity and the flow of protons through the CF(0) complex. The chain is ATP synthase gamma chain from Brucella ovis (strain ATCC 25840 / 63/290 / NCTC 10512).